The following is a 248-amino-acid chain: 23S rRNA (guanosine-2'-O-)-methyltransferase RlmB (248 aa).

Residues Gly-200, Ile-220, and Leu-229 each coordinate S-adenosyl-L-methionine.

This sequence belongs to the class IV-like SAM-binding methyltransferase superfamily. RNA methyltransferase TrmH family. RlmB subfamily.

It is found in the cytoplasm. The catalysed reaction is guanosine(2251) in 23S rRNA + S-adenosyl-L-methionine = 2'-O-methylguanosine(2251) in 23S rRNA + S-adenosyl-L-homocysteine + H(+). Its function is as follows. Specifically methylates the ribose of guanosine 2251 in 23S rRNA. The chain is 23S rRNA (guanosine-2'-O-)-methyltransferase RlmB from Acinetobacter baylyi (strain ATCC 33305 / BD413 / ADP1).